Consider the following 424-residue polypeptide: Glutathione reductase (424 aa).

Lys-8 lines the FAD pocket. Tyr-56 contributes to the glutathione binding site. An FAD-binding site is contributed by Ala-72. Residues Ala-137, Ile-140, Glu-143, Arg-160, Arg-166, and Gly-236 each coordinate NADP(+). Asp-277 is a binding site for FAD. Leu-283 is a binding site for NADP(+). Thr-285 serves as a coordination point for FAD. A glutathione-binding site is contributed by Arg-293. Val-316 is a binding site for NADP(+). Residue His-413 coordinates FAD. Catalysis depends on His-413, which acts as the Proton acceptor.

The protein belongs to the class-I pyridine nucleotide-disulfide oxidoreductase family. In terms of assembly, homodimer; disulfide-linked. FAD serves as cofactor.

Its subcellular location is the mitochondrion. It is found in the cytoplasm. The catalysed reaction is 2 glutathione + NADP(+) = glutathione disulfide + NADPH + H(+). In terms of biological role, catalyzes the reduction of glutathione disulfide (GSSG) to reduced glutathione (GSH). Constitutes the major mechanism to maintain a high GSH:GSSG ratio in the cytosol. The protein is Glutathione reductase (Gsr) of Rattus norvegicus (Rat).